Consider the following 449-residue polypeptide: 1H-pyrrole-2-carbonyl-[peptidyl-carrier protein] chlorinase (449 aa).

The FAD site is built by alanine 16, glutamate 35, arginine 41, histidine 43, valine 44, serine 47, arginine 123, isoleucine 147, and aspartate 316. The chloride site is built by serine 327 and glycine 328. Valine 329 contacts FAD.

This sequence belongs to the flavin-dependent halogenase family. As to quaternary structure, homodimer.

The enzyme catalyses (1H-pyrrole-2-carbonyl)-[peptidyl-carrier protein] + 2 FADH2 + 2 chloride + 2 O2 = (4,5-dichloro-1H-pyrrole-2-carbonyl)-[peptidyl-carrier protein] + 2 FAD + 4 H2O. It catalyses the reaction (1H-pyrrole-2-carbonyl)-[peptidyl-carrier protein] + FADH2 + chloride + O2 = (5-chloro-1H-pyrrole-2-carbonyl)-[peptidyl-carrier protein] + FAD + 2 H2O. It carries out the reaction (5-chloro-1H-pyrrole-2-carbonyl)-[peptidyl-carrier protein] + FADH2 + chloride + O2 = (4,5-dichloro-1H-pyrrole-2-carbonyl)-[peptidyl-carrier protein] + FAD + 2 H2O. It functions in the pathway antibiotic biosynthesis. Functionally, involved in the biosynthesis of the antibiotic pyoluteorin. Catalyzes the dichlorination of the pyrrole ring of pyrrolyl-S-PltL, generating the 5-chloropyrrolyl-S-PltL intermediate and then the 4,5-dichloropyrrolyl-S-PltL product. The protein is 1H-pyrrole-2-carbonyl-[peptidyl-carrier protein] chlorinase of Pseudomonas fluorescens (strain ATCC BAA-477 / NRRL B-23932 / Pf-5).